The chain runs to 1791 residues: Sodium channel protein type 11 subunit alpha (1791 aa).

The Cytoplasmic portion of the chain corresponds to 1–126 (MDDRCYPVIF…SIRSLAIRVS (126 aa)). The I repeat unit spans residues 115–408 (FNSIRSLAIR…VTMAYEEQNK (294 aa)). A helical transmembrane segment spans residues 127-148 (VHSLFSMFIIGTVIINCVFMAT). Topologically, residues 149-156 (GPAKNSNS) are extracellular. The chain crosses the membrane as a helical span at residues 157–180 (NNTDIAECVFTGIYIFEALIKILA). Residues 181–192 (RGFILDEFSFLR) are Cytoplasmic-facing. A helical membrane pass occupies residues 193 to 212 (DPWNWLDSIVIGIAIVSYIP). The Extracellular segment spans residues 213–219 (GITIKLL). Residues 220 to 239 (PLRTFRVFRALKAISVVSRL) form a helical; Voltage-sensor membrane-spanning segment. Residues 240 to 255 (KVIVGALLRSVKKLVN) lie on the Cytoplasmic side of the membrane. A helical transmembrane segment spans residues 256-269 (VIILTFFCLSIFAL). Over 270–344 (VGQQLFMGSL…PDYNYTNFDN (75 aa)) the chain is Extracellular. Cysteine 283 and cysteine 322 are disulfide-bonded. Residues asparagine 290 and asparagine 338 are each glycosylated (N-linked (GlcNAc...) asparagine). Positions 345-369 (FGWSFLAMFRLMTQDSWEKLYQQTL) form an intramembrane region, pore-forming. The Extracellular segment spans residues 370–376 (RTTGLYS). Residues 377 to 402 (VFFFIVVIFLGSFYLINLTLAVVTMA) form a helical membrane-spanning segment. Topologically, residues 403-572 (YEEQNKNVAA…WLCVKKVLRT (170 aa)) are cytoplasmic. The II repeat unit spans residues 559-833 (CCPQWLCVKK…EGEARKTKVQ (275 aa)). The chain crosses the membrane as a helical span at residues 573–596 (VMTDPFTELAITICIIINTVFLAM). The Extracellular portion of the chain corresponds to 597-607 (EHHKMEASFEK). The chain crosses the membrane as a helical span at residues 608-631 (MLNIGNLVFTSIFIAEMCLKIIAL). Residues 632–639 (DPYHYFRR) lie on the Cytoplasmic side of the membrane. Residues 640–659 (GWNIFDSIVALLSFADVMNC) form a helical membrane-spanning segment. Over 660–667 (VLQKRSWP) the chain is Extracellular. The chain crosses the membrane as a helical; Voltage-sensor span at residues 668 to 687 (FLRSFRVLRVFKLAKSWPTL). Residues 688-702 (NTLIKIIGNSVGALG) lie on the Cytoplasmic side of the membrane. A helical membrane pass occupies residues 703 to 725 (SLTVVLVIVIFIFSVVGMQLFGR). At 726 to 753 (SFNSQKSPKLCNPTGPTVSCLRHWHMGD) the chain is on the extracellular side. An intramembrane region (pore-forming) is located at residues 754 to 774 (FWHSFLVVFRILCGEWIENMW). Over 775-785 (ECMQEANASSS) the chain is Extracellular. Cysteine 776 and cysteine 787 are oxidised to a cystine. N-linked (GlcNAc...) asparagine glycosylation is present at asparagine 781. Residues 786-811 (LCVIVFILITVIGKLVVLNLFIALLL) traverse the membrane as a helical segment. Residues 812 to 1051 (NSFSNEERNG…WWNLRKTCYQ (240 aa)) lie on the Cytoplasmic side of the membrane. Residues 1044–1339 (NLRKTCYQIV…KKYYNAMKKL (296 aa)) form an III repeat. A helical transmembrane segment spans residues 1052–1074 (IVKHSWFESFIIFVILLSSGALI). Over 1075 to 1088 (FEDVHLENQPKIQE) the chain is Extracellular. A helical transmembrane segment spans residues 1089–1114 (LLNCTDIIFTHIFILEMVLKWVAFGF). The Cytoplasmic segment spans residues 1115-1120 (GKYFTS). The helical transmembrane segment at 1121–1138 (AWCCLDFIIVIVSVTTLI) threads the bilayer. Asparagine 1139 is a topological domain (extracellular). A helical; Voltage-sensor transmembrane segment spans residues 1140–1161 (LMELKSFRTLRALRPLRALSQF). Topologically, residues 1162–1180 (EGMKVVVNALIGAIPAILN) are cytoplasmic. A helical membrane pass occupies residues 1181-1202 (VLLVCLIFWLVFCILGVYFFSG). Residues 1203–1243 (KFGKCINGTDSVINYTIITNKSQCESGNFSWINQKVNFDNV) are Extracellular-facing. Asparagine 1209, asparagine 1216, asparagine 1222, and asparagine 1230 each carry an N-linked (GlcNAc...) asparagine glycan. Residues 1244–1265 (GNAYLALLQVATFKGWMDIIYA) constitute an intramembrane region (pore-forming). Residues 1266 to 1281 (AVDSTEKEQQPEFESN) lie on the Extracellular side of the membrane. The helical transmembrane segment at 1282–1308 (SLGYIYFVVFIIFGSFFTLNLFIGVII) threads the bilayer. Residues 1309 to 1361 (DNFNQQQKKLGGQDIFMTEEQKKYYNAMKKLGSKKPQKPIPRPLNKCQGLVFD) are Cytoplasmic-facing. The stretch at 1348–1639 (IPRPLNKCQG…WEKFDPEATQ (292 aa)) is one IV repeat. The helical transmembrane segment at 1362–1385 (IVTSQIFDIIIISLIILNMISMMA) threads the bilayer. Residues 1386–1396 (ESYNQPKAMKS) are Extracellular-facing. A helical membrane pass occupies residues 1397–1420 (ILDHLNWVFVVIFTLECLIKIFAL). Residues 1421–1426 (RQYYFT) are Cytoplasmic-facing. Residues 1427–1450 (NGWNLFDCVVVLLSIVSTMISTLE) traverse the membrane as a helical segment. Residues 1451 to 1461 (NQEHIPFPPTL) are Extracellular-facing. Residues 1462–1484 (FRIVRLARIGRILRLVRAARGIR) traverse the membrane as a helical; Voltage-sensor segment. Topologically, residues 1485–1499 (TLLFALMMSLPSLFN) are cytoplasmic. Residues 1500–1522 (IGLLLFLIMFIYAILGMNWFSKV) traverse the membrane as a helical segment. The Extracellular portion of the chain corresponds to 1523–1536 (NPESGIDDIFNFKT). The segment at residues 1537–1559 (FASSMLCLFQISTSAGWDSLLSP) is an intramembrane region (pore-forming). At 1560-1579 (MLRSKESCNSSSENCHLPGI) the chain is on the extracellular side. The N-linked (GlcNAc...) asparagine glycan is linked to asparagine 1568. The chain crosses the membrane as a helical span at residues 1580 to 1604 (ATSYFVSYIIISFLIVVNMYIAVIL). Residues 1605 to 1791 (ENFNTATEES…GVAKGKVHCD (187 aa)) lie on the Cytoplasmic side of the membrane.

It belongs to the sodium channel (TC 1.A.1.10) family. Nav1.9/SCN11A subfamily. The voltage-resistant sodium channel consists of an ion conducting pore forming alpha-subunit regulated by one or more auxiliary subunits SCN1B, SCN2B and SCN3B. As to expression, expressed in the dorsal root ganglia and trigeminal ganglia, olfactory bulb, hippocampus, cerebellar cortex, spinal cord, spleen, small intestine and placenta.

The protein localises to the cell membrane. The enzyme catalyses Na(+)(in) = Na(+)(out). With respect to regulation, activity is not sensitive to inhibition by tetrodotoxin. In terms of biological role, sodium channel mediating the voltage-dependent sodium ion permeability of excitable membranes. Assuming opened or closed conformations in response to the voltage difference across the membrane, the protein forms a sodium-selective channel through which sodium ions may pass in accordance with their electrochemical gradient. Involved in membrane depolarization during action potential in nociceptors which function as key relay stations for the electrical transmission of pain signals from the periphery to the central nervous system. Also involved in rapid BDNF-evoked neuronal depolarization. In Homo sapiens (Human), this protein is Sodium channel protein type 11 subunit alpha.